A 1069-amino-acid chain; its full sequence is DNA annealing helicase and endonuclease ZRANB3 (1069 aa).

Positions 46-208 constitute a Helicase ATP-binding domain; the sequence is VFALRRDGRC…FMQIEALFPQ (163 aa). The interval 46-481 is DNA annealing helicase activity; it reads VFALRRDGRC…GRKEKLQATE (436 aa). 59–66 lines the ATP pocket; the sequence is DEMGLGKT. Residues 157–160 carry the DEAH box motif; it reads DESH. The Helicase C-terminal domain occupies 325 to 485; it reads AVKDYIKMLL…KLQATEDDKE (161 aa). The short motif at 518 to 525 is the PIP-box element; sequence QHDIRSFF. The RanBP2-type zinc finger occupies 617–646; it reads PEKGWQCGFCTFLNNPGLPYCEMCENPRSR. A disordered region spans residues 648 to 720; that stretch reads AGRNHLQDNN…PEIGQLNNSG (73 aa). Basic and acidic residues-rich tracts occupy residues 652 to 661 and 677 to 707; these read HLQDNNKNDE and ECERQCPERLEAEQSANSKEEALEGGGEDRL. Positions 1001-1041 constitute an HNH domain; that stretch reads PGEGHFWQVDHIRPVYEGGGQCSLDNLQTLCTVCHKERTAQ. Positions 1001–1069 are endonuclease activity; sequence PGEGHFWQVD…SDITRFLVKK (69 aa). The short motif at 1064 to 1068 is the APIM motif element; that stretch reads RFLVK.

This sequence belongs to the SNF2/RAD54 helicase family. Interacts (via PIP-box and RanBP2-type zinc finger) with PCNA (when PCNA is polyubiquitinated via 'Lys-63'-linked polyubiquitin).

The protein resides in the nucleus. It localises to the chromosome. Functionally, DNA annealing helicase and endonuclease required to maintain genome stability at stalled or collapsed replication forks by facilitating fork restart and limiting inappropriate recombination that could occur during template switching events. Recruited to the sites of stalled DNA replication by polyubiquitinated PCNA and acts as a structure-specific endonuclease that cleaves the replication fork D-loop intermediate, generating an accessible 3'-OH group in the template of the leading strand, which is amenable to extension by DNA polymerase. In addition to endonuclease activity, also catalyzes the fork regression via annealing helicase activity in order to prevent disintegration of the replication fork and the formation of double-strand breaks. In Mus musculus (Mouse), this protein is DNA annealing helicase and endonuclease ZRANB3 (Zranb3).